We begin with the raw amino-acid sequence, 80 residues long: Probable Rubredoxin-1 (80 aa).

A Rubredoxin-like domain is found at 19-72 (YRKYKCKVCGWVYDPLKGDPSQNIPPKTPFEELPDTWICPVCRGKVGKESFEPL). Fe cation contacts are provided by Cys-24, Cys-27, Cys-57, and Cys-60.

Belongs to the rubredoxin family. Requires Fe(3+) as cofactor.

Its function is as follows. Rubredoxin is a small nonheme, iron protein lacking acid-labile sulfide. Its single Fe, chelated to 4 Cys, functions as an electron acceptor and may also stabilize the conformation of the molecule. This chain is Probable Rubredoxin-1, found in Methanocaldococcus jannaschii (strain ATCC 43067 / DSM 2661 / JAL-1 / JCM 10045 / NBRC 100440) (Methanococcus jannaschii).